The sequence spans 479 residues: DNA polymerase IV (479 aa).

The UmuC domain maps to Ile7–Gly189. Mg(2+) is bound by residues Asp11 and Asp105. Glu106 is an active-site residue. Disordered stretches follow at residues Ala357–Trp400 and Asp430–Pro479. Residues Ala381–Leu396 show a composition bias toward basic and acidic residues.

This sequence belongs to the DNA polymerase type-Y family. Monomer. Mg(2+) serves as cofactor.

Its subcellular location is the cytoplasm. It carries out the reaction DNA(n) + a 2'-deoxyribonucleoside 5'-triphosphate = DNA(n+1) + diphosphate. Its function is as follows. Poorly processive, error-prone DNA polymerase involved in untargeted mutagenesis. Copies undamaged DNA at stalled replication forks, which arise in vivo from mismatched or misaligned primer ends. These misaligned primers can be extended by PolIV. Exhibits no 3'-5' exonuclease (proofreading) activity. May be involved in translesional synthesis, in conjunction with the beta clamp from PolIII. In Streptomyces coelicolor (strain ATCC BAA-471 / A3(2) / M145), this protein is DNA polymerase IV.